A 250-amino-acid chain; its full sequence is Large ribosomal subunit protein uL29m (250 aa).

The N-terminal 24 residues, 1–24 (MRPGAASIRTTGSVLAFLVPSAQC), are a transit peptide targeting the mitochondrion. Residues 66–86 (VLSKKGSGDQPPKPVPITEKV) form a disordered region.

It belongs to the universal ribosomal protein uL29 family. In terms of assembly, component of the mitochondrial large ribosomal subunit. Mature mitochondrial ribosomes consist of a small (37S) and a large (54S) subunit. The 37S subunit contains at least 33 different proteins and 1 molecule of RNA (15S). The 54S subunit contains at least 45 different proteins and 1 molecule of RNA (21S).

Its subcellular location is the mitochondrion. The chain is Large ribosomal subunit protein uL29m (MRPL4) from Phaeosphaeria nodorum (strain SN15 / ATCC MYA-4574 / FGSC 10173) (Glume blotch fungus).